A 566-amino-acid chain; its full sequence is Phenylalanine--tRNA ligase beta subunit (566 aa).

The 76-residue stretch at 287–362 (YFQEEVEFNV…IGEGLSSFNP (76 aa)) folds into the B5 domain. Mg(2+)-binding residues include Asp340, Asp346, Glu349, and Asp350.

It belongs to the phenylalanyl-tRNA synthetase beta subunit family. Type 2 subfamily. Tetramer of two alpha and two beta subunits. It depends on Mg(2+) as a cofactor.

The protein localises to the cytoplasm. It carries out the reaction tRNA(Phe) + L-phenylalanine + ATP = L-phenylalanyl-tRNA(Phe) + AMP + diphosphate + H(+). The chain is Phenylalanine--tRNA ligase beta subunit from Borreliella burgdorferi (strain ZS7) (Borrelia burgdorferi).